Reading from the N-terminus, the 656-residue chain is Nexilin (656 aa).

Disordered stretches follow at residues 1 to 131 (MNDV…IEQD), 165 to 198 (RAAA…EEEC), and 215 to 284 (TEAK…VFKE). A compositionally biased stretch (low complexity) spans 11–26 (LLSSSKPVPKSYVPKL). Residues 27-78 (GKGDVKDKFEAMQRAREERNQRRSRDEKQRRKEQYIREREWNRRKQEIKDML) show a composition bias toward basic and acidic residues. At serine 80 the chain carries Phosphoserine. Composition is skewed to basic and acidic residues over residues 103–131 (GKFD…IEQD), 169–198 (NRKD…EEEC), and 216–269 (EAKK…RNMV). Phosphoserine occurs at positions 221, 330, 337, and 345. At threonine 350 the chain carries Phosphothreonine. 2 disordered regions span residues 468–492 (NFHE…HKVN) and 529–564 (AALQ…APWF). Phosphoserine occurs at positions 544 and 549. At threonine 551 the chain carries Phosphothreonine. Positions 562–650 (PWFKKPLRNT…GSAASTCILT (89 aa)) constitute an Ig-like domain.

As to quaternary structure, interacts with F-actin. Expressed in brain, testis, spleen and fibroblasts (at protein level). Not detected in liver, kidney or epithelial cells (at protein level).

It is found in the cytoplasm. The protein localises to the cytoskeleton. The protein resides in the cell junction. It localises to the adherens junction. Its subcellular location is the myofibril. It is found in the sarcomere. The protein localises to the z line. In terms of biological role, involved in regulating cell migration through association with the actin cytoskeleton. Has an essential role in the maintenance of Z line and sarcomere integrity. The protein is Nexilin of Rattus norvegicus (Rat).